Consider the following 278-residue polypeptide: Toxin coregulated pilus biosynthesis protein D (278 aa).

Residues 30 to 50 (LLVAIIFLVLSILGGGAYLYY) form a helical membrane-spanning segment.

The protein localises to the cell membrane. Its function is as follows. Involved in TCP pilus biogenesis. This Vibrio cholerae serotype O1 (strain ATCC 39315 / El Tor Inaba N16961) protein is Toxin coregulated pilus biosynthesis protein D (tcpD).